The primary structure comprises 460 residues: ATP synthase subunit beta (460 aa).

150–157 (GGAGVGKT) provides a ligand contact to ATP.

The protein belongs to the ATPase alpha/beta chains family. F-type ATPases have 2 components, CF(1) - the catalytic core - and CF(0) - the membrane proton channel. CF(1) has five subunits: alpha(3), beta(3), gamma(1), delta(1), epsilon(1). CF(0) has three main subunits: a(1), b(2) and c(9-12). The alpha and beta chains form an alternating ring which encloses part of the gamma chain. CF(1) is attached to CF(0) by a central stalk formed by the gamma and epsilon chains, while a peripheral stalk is formed by the delta and b chains.

Its subcellular location is the cell inner membrane. The catalysed reaction is ATP + H2O + 4 H(+)(in) = ADP + phosphate + 5 H(+)(out). Its function is as follows. Produces ATP from ADP in the presence of a proton gradient across the membrane. The catalytic sites are hosted primarily by the beta subunits. The sequence is that of ATP synthase subunit beta from Yersinia enterocolitica serotype O:8 / biotype 1B (strain NCTC 13174 / 8081).